Here is a 112-residue protein sequence, read N- to C-terminus: Integration host factor subunit alpha (112 aa).

This sequence belongs to the bacterial histone-like protein family. Heterodimer of an alpha and a beta chain.

In terms of biological role, this protein is one of the two subunits of integration host factor, a specific DNA-binding protein that functions in genetic recombination as well as in transcriptional and translational control. The sequence is that of Integration host factor subunit alpha from Allorhizobium ampelinum (strain ATCC BAA-846 / DSM 112012 / S4) (Agrobacterium vitis (strain S4)).